Consider the following 183-residue polypeptide: Protein CT_584 (183 aa).

This sequence belongs to the chlamydial CPn_0803/CT_584/TC_0873 family.

The sequence is that of Protein CT_584 from Chlamydia trachomatis serovar D (strain ATCC VR-885 / DSM 19411 / UW-3/Cx).